We begin with the raw amino-acid sequence, 313 residues long: Biotin synthase (313 aa).

Positions 28 to 258 constitute a Radical SAM core domain; sequence NFGNDIELCS…LFPQARLRLS (231 aa). [4Fe-4S] cluster-binding residues include Cys-46, Cys-50, and Cys-53. [2Fe-2S] cluster contacts are provided by Cys-90, Cys-121, Cys-181, and Arg-256.

Belongs to the radical SAM superfamily. Biotin synthase family. Homodimer. Requires [4Fe-4S] cluster as cofactor. The cofactor is [2Fe-2S] cluster.

The enzyme catalyses (4R,5S)-dethiobiotin + (sulfur carrier)-SH + 2 reduced [2Fe-2S]-[ferredoxin] + 2 S-adenosyl-L-methionine = (sulfur carrier)-H + biotin + 2 5'-deoxyadenosine + 2 L-methionine + 2 oxidized [2Fe-2S]-[ferredoxin]. It participates in cofactor biosynthesis; biotin biosynthesis; biotin from 7,8-diaminononanoate: step 2/2. Catalyzes the conversion of dethiobiotin (DTB) to biotin by the insertion of a sulfur atom into dethiobiotin via a radical-based mechanism. This Francisella tularensis subsp. tularensis (strain FSC 198) protein is Biotin synthase.